Here is a 286-residue protein sequence, read N- to C-terminus: D-tagatose-1,6-bisphosphate aldolase subunit KbaY (286 aa).

Asp82 (proton donor) is an active-site residue. 2 residues coordinate Zn(2+): His83 and His180. A dihydroxyacetone phosphate-binding site is contributed by Gly181. His208 is a Zn(2+) binding site. Residues 209 to 211 (GAS) and 230 to 233 (NVAT) each bind dihydroxyacetone phosphate.

Belongs to the class II fructose-bisphosphate aldolase family. TagBP aldolase KbaY subfamily. Homotetramer. Forms a complex with KbaZ. Zn(2+) is required as a cofactor.

It carries out the reaction D-tagatofuranose 1,6-bisphosphate = D-glyceraldehyde 3-phosphate + dihydroxyacetone phosphate. Its pathway is carbohydrate metabolism; D-tagatose 6-phosphate degradation; D-glyceraldehyde 3-phosphate and glycerone phosphate from D-tagatose 6-phosphate: step 2/2. In terms of biological role, catalytic subunit of the tagatose-1,6-bisphosphate aldolase KbaYZ, which catalyzes the reversible aldol condensation of dihydroxyacetone phosphate (DHAP or glycerone-phosphate) with glyceraldehyde 3-phosphate (G3P) to produce tagatose 1,6-bisphosphate (TBP). Requires KbaZ subunit for full activity and stability. The protein is D-tagatose-1,6-bisphosphate aldolase subunit KbaY of Escherichia coli O7:K1 (strain IAI39 / ExPEC).